Here is a 366-residue protein sequence, read N- to C-terminus: Aminomethyltransferase (366 aa).

The protein belongs to the GcvT family. The glycine cleavage system is composed of four proteins: P, T, L and H.

The catalysed reaction is N(6)-[(R)-S(8)-aminomethyldihydrolipoyl]-L-lysyl-[protein] + (6S)-5,6,7,8-tetrahydrofolate = N(6)-[(R)-dihydrolipoyl]-L-lysyl-[protein] + (6R)-5,10-methylene-5,6,7,8-tetrahydrofolate + NH4(+). Its function is as follows. The glycine cleavage system catalyzes the degradation of glycine. The chain is Aminomethyltransferase from Bordetella bronchiseptica (strain ATCC BAA-588 / NCTC 13252 / RB50) (Alcaligenes bronchisepticus).